The primary structure comprises 367 residues: Aspartate-semialdehyde dehydrogenase (367 aa).

Residues Arg-10–Val-13, Thr-37–Ser-38, and Gln-73 each bind NADP(+). Phosphate is bound at residue Arg-102. Cys-135 functions as the Acyl-thioester intermediate in the catalytic mechanism. Position 135 is an S-cysteinyl cysteine; in inhibited form (Cys-135). Gln-162 provides a ligand contact to substrate. NADP(+) contacts are provided by residues Ser-165 to Gly-166 and Pro-193. Position 241 (Glu-241) interacts with substrate. Lys-244 is a binding site for phosphate. Arg-267 contributes to the substrate binding site. The active-site Proton acceptor is His-274. Gln-350 contributes to the NADP(+) binding site.

It belongs to the aspartate-semialdehyde dehydrogenase family. As to quaternary structure, homodimer.

The enzyme catalyses L-aspartate 4-semialdehyde + phosphate + NADP(+) = 4-phospho-L-aspartate + NADPH + H(+). The protein operates within amino-acid biosynthesis; L-lysine biosynthesis via DAP pathway; (S)-tetrahydrodipicolinate from L-aspartate: step 2/4. It functions in the pathway amino-acid biosynthesis; L-methionine biosynthesis via de novo pathway; L-homoserine from L-aspartate: step 2/3. It participates in amino-acid biosynthesis; L-threonine biosynthesis; L-threonine from L-aspartate: step 2/5. Functionally, catalyzes the NADPH-dependent formation of L-aspartate-semialdehyde (L-ASA) by the reductive dephosphorylation of L-aspartyl-4-phosphate. The protein is Aspartate-semialdehyde dehydrogenase of Escherichia coli O6:H1 (strain CFT073 / ATCC 700928 / UPEC).